The following is a 948-amino-acid chain: Phosphoenolpyruvate carboxylase (948 aa).

Active-site residues include His-138 and Lys-610.

Belongs to the PEPCase type 1 family. Mg(2+) is required as a cofactor.

It catalyses the reaction oxaloacetate + phosphate = phosphoenolpyruvate + hydrogencarbonate. Its function is as follows. Forms oxaloacetate, a four-carbon dicarboxylic acid source for the tricarboxylic acid cycle. This chain is Phosphoenolpyruvate carboxylase, found in Streptococcus gordonii (strain Challis / ATCC 35105 / BCRC 15272 / CH1 / DL1 / V288).